A 388-amino-acid chain; its full sequence is F-box protein At5g42460 (388 aa).

The F-box domain maps to 1–47 (MTIMSDLPRDLLAEILSRVPLTSLRAVRLTCKKWNDLSKDRSFLKKQ).

The chain is F-box protein At5g42460 from Arabidopsis thaliana (Mouse-ear cress).